The following is a 3814-amino-acid chain: Hybrid PKS-NRPS synthetase pyvA (3814 aa).

Residues 1 to 340 (MDPQQRLLLE…GSNAHVILES (340 aa)) form the Ketosynthase family 3 (KS3) domain. Active-site for beta-ketoacyl synthase activity residues include cysteine 87, histidine 222, and histidine 261. The segment at 441-758 (VFTGQGAQWH…PYFASLSRGV (318 aa)) is malonyl-CoA:ACP transacylase (MAT) domain. Serine 533 serves as the catalytic For malonyltransferase activity. The segment at 835 to 970 (HPILGAKMPG…GLISISTATT (136 aa)) is N-terminal hotdog fold. Positions 835–1149 (HPILGAKMPG…LRLTSLSNGR (315 aa)) are dehydratase (DH) domain. In terms of domain architecture, PKS/mFAS DH spans 835-1151 (HPILGAKMPG…LTSLSNGRAA (317 aa)). Catalysis depends on histidine 867, which acts as the Proton acceptor; for dehydratase activity. Residues 970–993 (TADGAPSRKPYRQHPQPQPGRMST) are disordered. Residues 991–1151 (MSTASFPAQS…LTSLSNGRAA (161 aa)) are C-terminal hotdog fold. The active-site Proton donor; for dehydratase activity is aspartate 1057. An enoyl reductase (ER) domain region spans residues 1520–1836 (GLLETLVWED…MGRHTGKVVL (317 aa)). Residues 1864-2036 (TYLLVGGLGG…PASSMNCGRI (173 aa)) form a ketoreductase (KR) domain region. Residues 2141-2220 (IDLSDRVALL…ALVEKAIGLF (80 aa)) form the Carrier 1 domain. Serine 2180 carries the O-(pantetheine 4'-phosphoryl)serine modification. Residues 2228–2238 (QQQQQSVQSSS) are compositionally biased toward low complexity. Positions 2228-2270 (QQQQQSVQSSSAPSNDDQSPTFNKNLDSQDPSTSLQIPKADCS) are disordered. The span at 2239–2263 (APSNDDQSPTFNKNLDSQDPSTSLQ) shows a compositional bias: polar residues. Residues 2273–2718 (LPMSTFQNRL…PEVRLAGTLE (446 aa)) are condensation (C) domain 7. Residues 2738–3149 (PLNLPRRIVE…DGQLEFLGRI (412 aa)) are adenylation (A) domain 8. Residues 3257-3304 (SGKTDRRALGASQAPGTPPQHGAGPAAASTLDPAQAQAQDRADEEVGD) form a disordered region. The Carrier 2 domain occupies 3304-3379 (DRTMATVTRV…QLVELVHSKV (76 aa)). Residue serine 3339 is modified to O-(pantetheine 4'-phosphoryl)serine. The thioesterase (TE) domain stretch occupies residues 3428–3680 (MTGAESFTGI…VDLVPVNYLT (253 aa)).

It in the C-terminal section; belongs to the NRP synthetase family.

Its pathway is secondary metabolite biosynthesis. Its function is as follows. Hybrid PKS-NRPS synthetase; part of the gene cluster that mediates the biosynthesis of pyranoviolin A, a pyranonigrin analog with a C-3 methoxy group. Initially, the PKS portion of pyvA synthesizes C-10 carbon chain from 5 molecules of malonyl-CoA, which is then condensed with the thiolation (T) domain-bound glycine activated by the adenylation (A) domain. The subsequent chain release by Dieckmann condensation (DKC) could be catalyzed by the TE domain present at the C-terminus of pyvA and/or the alpha/beta hydrolase pyvD, installing the tetramic acid moiety. The FAD-dependent monooxygenase pyvC next epoxidizes one of the olefins of the polyketide part, and the epoxide ring-opening induces the dihydro-gamma-pyrone ring formation. The cytochrome P450 monooxygeanse pyvB would be responsible for the 2 consecutive reactions, in which the dihydro-gamma-pyrone is oxidized to gamma-pyrone and C-7 is hydroxylated to yield pyranonigrin F. Finally, the O-methyltransferase pyvH methylates the C-3 hydroxy group to complete the biosynthesis. This Aspergillus violaceofuscus (strain CBS 115571) protein is Hybrid PKS-NRPS synthetase pyvA.